Consider the following 103-residue polypeptide: Integration host factor subunit beta (103 aa).

The disordered stretch occupies residues 62 to 81 (RNPKTGESVALPGKHVPHFK).

The protein belongs to the bacterial histone-like protein family. Heterodimer of an alpha and a beta chain.

Functionally, this protein is one of the two subunits of integration host factor, a specific DNA-binding protein that functions in genetic recombination as well as in transcriptional and translational control. The sequence is that of Integration host factor subunit beta from Xanthomonas campestris pv. campestris (strain B100).